The chain runs to 407 residues: Protein ZNF365 (407 aa).

Residue Ser-16 is modified to Phosphoserine. Residues 26–51 (FRCPRCGDHTRFRSLSSLRAHLEFSH) form a C2H2-type; degenerate zinc finger. Ser-138 carries the post-translational modification Phosphoserine. Positions 169–296 (VEAVDRTIEK…KQLEYYQSQQ (128 aa)) form a coiled coil. Thr-175 is subject to Phosphothreonine. Positions 347–392 (LKKAKDDRASMQPAKAIHEQAESSRDLCRPPKKGELLGFGRKGNIR) are disordered. A compositionally biased stretch (basic and acidic residues) spans 362–381 (AIHEQAESSRDLCRPPKKGE). Phosphoserine is present on Ser-369.

As to quaternary structure, homodimers. Interacts with NDE1 and NDEL1. Interacts with DISC1. Interacts with PARP1. Interacts with MCRS1.

It is found in the cytoplasm. The protein resides in the cytoskeleton. It localises to the microtubule organizing center. The protein localises to the centrosome. In terms of biological role, involved in the regulation of neurogenesis. Negatively regulates neurite outgrowth. Involved in the morphogenesis of basket cells in the somatosensory cortex during embryogenesis. Involved in the positive regulation of oligodendrocyte differentiation during postnatal growth. Involved in dendritic arborization, morphogenesis of spine density dendrite, and establishment of postsynaptic dendrite density in cortical pyramidal neurons. Involved in homologous recombination (HR) repair pathway. Required for proper resolution of DNA double-strand breaks (DSBs) by HR. Is required for recovery of stalled replication forks, and directly contributes to genomic stability. Interacts with PARP1 and mediates MRE11-dependent DNA end resection during replication fork recovery. Contributes to genomic stability by preventing telomere dysfunction. This is Protein ZNF365 (ZNF365) from Pongo abelii (Sumatran orangutan).